The sequence spans 380 residues: Maintenance of mitochondrial morphology protein 1 (380 aa).

Residues 1 to 64 (MQGRAIWAEG…IVPSLSFIQG (64 aa)) are Lumenal-facing. Residues 65-85 (FMAGQAVLLMLFLGLFRYFFM) form a helical membrane-spanning segment. Over 86 to 380 (TSSPGTRAQQ…IGTSPADPLA (295 aa)) the chain is Cytoplasmic. The SMP-LTD domain maps to 147–369 (APESLDWLNV…WPHFWHIPLP (223 aa)).

The protein belongs to the MMM1 family. In terms of assembly, homodimer. Component of the ER-mitochondria encounter structure (ERMES) or MDM complex, composed of MMM1, MDM10, MDM12 and MDM34. An MMM1 homodimer associates with one molecule of MDM12 on each side in a pairwise head-to-tail manner, and the SMP-LTD domains of MMM1 and MDM12 generate a continuous hydrophobic tunnel for phospholipid trafficking.

Its subcellular location is the endoplasmic reticulum membrane. In terms of biological role, component of the ERMES/MDM complex, which serves as a molecular tether to connect the endoplasmic reticulum (ER) and mitochondria. Components of this complex are involved in the control of mitochondrial shape and protein biogenesis, and function in nonvesicular lipid trafficking between the ER and mitochondria. The MDM12-MMM1 subcomplex functions in the major beta-barrel assembly pathway that is responsible for biogenesis of all outer membrane beta-barrel proteins, and acts in a late step after the SAM complex. The MDM10-MDM12-MMM1 subcomplex further acts in the TOM40-specific pathway after the action of the MDM12-MMM1 complex. Essential for establishing and maintaining the structure of mitochondria and maintenance of mtDNA nucleoids. This chain is Maintenance of mitochondrial morphology protein 1, found in Malassezia globosa (strain ATCC MYA-4612 / CBS 7966) (Dandruff-associated fungus).